The primary structure comprises 1588 residues: Paternally-expressed gene 3 protein (1588 aa).

In terms of domain architecture, SCAN box spans 46 to 128 (HQRFRNLIYV…TLLENYKEMY (83 aa)). Disordered regions lie at residues 128–230 (YQPE…ESYQ), 266–306 (DGHS…RRGI), and 319–349 (KFIKDVSRSSKSGRARESSDRSQRFPRMSDD). Residues 129–142 (QPEDDNNSDVTSDD) are compositionally biased toward acidic residues. Basic and acidic residues-rich tracts occupy residues 143–152 (DMTRNRRESS), 161–182 (SGDRDWDRRGRSRDMEPRDRWS), 206–225 (FEMDRDDDRDSRAYESRSQD), and 295–306 (PEAKKSTHRRGI). 3 C2H2-type zinc fingers span residues 454–476 (YVCDECGRSFSVISEFVEHQIMH), 507–529 (FECKDCGETFNKSAALAEHRKIH), and 565–587 (YECRVCKETFLHSSALIEHQKIH). Over residues 588-607 (FGDDKDNEREHERERERGET) the composition is skewed to basic and acidic residues. A disordered region spans residues 588 to 610 (FGDDKDNEREHERERERGETFRP). The C2H2-type 4 zinc-finger motif lies at 627-649 (YECKVCGETFLHSSSLKEHQKIH). Positions 838–930 (LVASKPPRSH…EFSVPSSNVR (93 aa)) are disordered. Over residues 868 to 881 (LNDKRQKIPARENP) the composition is skewed to basic and acidic residues. Residues 969 to 991 (YECQECGECFAHSSDLTEHQKIH) form a C2H2-type 5 zinc finger. Positions 1056-1104 (EKSHGEESQGENTDGEETHSEETHGQETIEDPVIQGSDMEDPQKDDPDD) are disordered. Residues 1071–1082 (EETHSEETHGQE) show a composition bias toward basic and acidic residues. 5 C2H2-type zinc fingers span residues 1107-1129 (YECEDCGLGFVDLTDLTDHQKVH), 1163-1185 (YECPKCGESFIHSSFLFEHQRIH), 1225-1247 (IRCLLCGQGFIHSSALNEHMRLH), 1282-1304 (FECAVCGESFINPAELADHVTVH), and 1332-1354 (YECKDCGKSFIHSTVLTKHKELH). Over residues 1395–1415 (AEPEVEAAEPEVEAAEPEVEA) the composition is skewed to acidic residues. A disordered region spans residues 1395 to 1495 (AEPEVEAAEP…GIEDPEEGED (101 aa)). Repeat copies occupy residues 1397–1403 (PEVEAAE), 1404–1410 (PEVEAAE), 1411–1417 (PEVEAAE), 1418–1422 (PNGEA), 1425–1429 (PDGEA), 1432–1436 (PIGEA), and 1439–1443 (PNGEA). Residues 1397–1417 (PEVEAAEPEVEAAEPEVEAAE) are 3 X 7 AA repeat of P-E-V-E-A-A-E. The 4 X 5 AA repeat of P-X-G-E-A stretch occupies residues 1418 to 1443 (PNGEAEGPDGEAAEPIGEAGQPNGEA). Composition is skewed to acidic residues over residues 1449 to 1466 (DADEPDGAGIEDPEERAE) and 1475 to 1495 (PEGDADEPDGVGIEDPEEGED). 2 C2H2-type zinc fingers span residues 1505-1527 (YDCHECTETFTSSTAFGEHLKTH) and 1564-1586 (FKCDVCGQLFNDRLSLARHQNTH).

The protein belongs to the krueppel C2H2-type zinc-finger protein family. In terms of assembly, homodimer. Interacts with SIAH1A and SIAH2. Interacts with TRAF2.

It is found in the nucleus. Its subcellular location is the cytoplasm. In terms of biological role, induces apoptosis in cooperation with SIAH1A. Acts as a mediator between p53/TP53 and BAX in a neuronal death pathway that is activated by DNA damage. Acts synergistically with TRAF2 and inhibits TNF induced apoptosis through activation of NF-kappa-B. The sequence is that of Paternally-expressed gene 3 protein (PEG3) from Pan troglodytes (Chimpanzee).